The chain runs to 363 residues: NAD(P)H-quinone oxidoreductase subunit 1, chloroplastic (363 aa).

The next 7 helical transmembrane spans lie at 30 to 50 (LVPI…IVWL), 98 to 118 (FSIG…VIPF), 129 to 149 (VGVF…LMSG), 165 to 185 (AAQS…ISLL), 253 to 273 (FAFF…FVTI), 303 to 323 (TTTE…ISIT), and 336 to 356 (LLNL…LLTT).

This sequence belongs to the complex I subunit 1 family. NDH is composed of at least 16 different subunits, 5 of which are encoded in the nucleus.

The protein resides in the plastid. It is found in the chloroplast thylakoid membrane. It carries out the reaction a plastoquinone + NADH + (n+1) H(+)(in) = a plastoquinol + NAD(+) + n H(+)(out). It catalyses the reaction a plastoquinone + NADPH + (n+1) H(+)(in) = a plastoquinol + NADP(+) + n H(+)(out). NDH shuttles electrons from NAD(P)H:plastoquinone, via FMN and iron-sulfur (Fe-S) centers, to quinones in the photosynthetic chain and possibly in a chloroplast respiratory chain. The immediate electron acceptor for the enzyme in this species is believed to be plastoquinone. Couples the redox reaction to proton translocation, and thus conserves the redox energy in a proton gradient. This chain is NAD(P)H-quinone oxidoreductase subunit 1, chloroplastic, found in Pelargonium hortorum (Common geranium).